The sequence spans 601 residues: ATP-dependent lipid A-core flippase (601 aa).

The next 6 membrane-spanning stretches (helical) occupy residues 35–55, 77–97, 150–170, 173–193, 263–283, and 286–306; these read FAVA…LAFL, LAII…AILM, AVTS…VIFY, WQLA…IAKF, MEFL…YQVI, and SSTP…YEPV. One can recognise an ABC transmembrane type-1 domain in the interval 36–318; it reads AVAMVCMLIA…LTNVNNTIQQ (283 aa). The ABC transporter domain occupies 352 to 585; it reads IEIRNISFAY…RGEYYKLHQL (234 aa). 384 to 391 provides a ligand contact to ATP; sequence GMSGGGKT.

The protein belongs to the ABC transporter superfamily. Lipid exporter (TC 3.A.1.106) family. Homodimer.

The protein resides in the cell inner membrane. It carries out the reaction ATP + H2O + lipid A-core oligosaccharideSide 1 = ADP + phosphate + lipid A-core oligosaccharideSide 2.. Its function is as follows. Involved in lipopolysaccharide (LPS) biosynthesis. Translocates lipid A-core from the inner to the outer leaflet of the inner membrane. Transmembrane domains (TMD) form a pore in the inner membrane and the ATP-binding domain (NBD) is responsible for energy generation. The sequence is that of ATP-dependent lipid A-core flippase from Syntrophus aciditrophicus (strain SB).